Here is a 271-residue protein sequence, read N- to C-terminus: Calretinin (271 aa).

EF-hand domains are found at residues 16–51 (LTASQFLEIWKHFDADGNGYIEGKELENFFQELEKA), 63–98 (NFGEKMKEFMQKYDKNSDGKIEMAELAQILPTEENF), 107–142 (GSSAEFMEAWRKYDTDRSGYIEANELKGFLSDLLKK), 151–186 (KLQEYTQTILRMFDLNGDGKLGLSEMSRLLPVQENF), 195–230 (LTSEEFNAIFTFYDKDRSGYIDEHELDALLKDLYEK), and 235–270 (MNIQQLTNYRKSVMSLAEAGKLYRKDLEIVLCSEPP). Positions 29, 31, 33, 35, 40, 76, 78, 80, 82, 87, 120, 122, 124, 126, 131, 164, 166, 168, 170, 175, 208, 210, 212, 214, and 219 each coordinate Ca(2+). A Phosphotyrosine modification is found at Y214.

It belongs to the calbindin family. As to expression, brain.

It is found in the synapse. The protein resides in the cell projection. The protein localises to the dendrite. Functionally, calcium-binding protein involved in calcium homeostasis and signal transduction. It plays a critical role in buffering intracellular calcium levels and modulating calcium-dependent signaling pathways. Predominantly expressed in specific neuronal populations, influences synaptic plasticity and neuronal excitability, contributing to learning and memory. During embryonic development, it facilitates neuronal differentiation and maturation. The polypeptide is Calretinin (Homo sapiens (Human)).